A 507-amino-acid chain; its full sequence is Maturase K (507 aa).

This sequence belongs to the intron maturase 2 family. MatK subfamily.

Its subcellular location is the plastid. It is found in the chloroplast. Usually encoded in the trnK tRNA gene intron. Probably assists in splicing its own and other chloroplast group II introns. This Browningia hertlingiana (Cactus) protein is Maturase K.